The sequence spans 558 residues: Phosphatidylserine lipase ABHD16A (558 aa).

2 consecutive transmembrane segments (helical) span residues 60–80 and 93–113; these read ILAL…FAFF and VVPF…VACL. At 114-558 the chain is on the cytoplasmic side; sequence RGIGRWTNPQ…AQNFQMPWHL (445 aa). Positions 281-407 constitute an AB hydrolase-1 domain; sequence LVICCEGNAG…LVTRTVRQHL (127 aa). Active-site charge relay system residues include serine 355, aspartate 430, and histidine 507.

Belongs to the AB hydrolase superfamily. ABHD16 family.

The protein resides in the membrane. The catalysed reaction is 1-heptadecanoyl-2-(5Z,8Z,11Z,14Z-eicosatetraenoyl)-sn-glycero-3-phosphoserine + H2O = 1-heptadecanoyl-sn-glycero-3-phosphoserine + (5Z,8Z,11Z,14Z)-eicosatetraenoate + H(+). It carries out the reaction 1-hexadecanoyl-2-(9Z-octadecenoyl)-sn-glycero-3-phospho-L-serine + H2O = 1-hexadecanoyl-sn-glycero-3-phospho-L-serine + (9Z)-octadecenoate + H(+). The enzyme catalyses 1-octadecanoyl-2-(9Z,12Z-octadecadienoyl)-sn-glycero-3-phosphoserine + H2O = 1-octadecanoyl-sn-glycero-3-phosphoserine + (9Z,12Z)-octadecadienoate + H(+). It catalyses the reaction 1-heptadecanoyl-2-(5Z,8Z,11Z,14Z-eicosatetraenoyl)-sn-glycero-3-phosphocholine + H2O = 1-heptadecanoyl-sn-glycero-3-phosphocholine + (5Z,8Z,11Z,14Z)-eicosatetraenoate + H(+). The catalysed reaction is 1-hexadecanoyl-2-(9Z-octadecenoyl)-sn-glycero-3-phosphoglycerol + H2O = 1-hexadecanoyl-sn-glycero-3-phosphoglycerol + (9Z)-octadecenoate + H(+). It carries out the reaction 1-hexadecanoyl-2-(9Z-octadecenoyl)-sn-glycero-3-phospho-(1D-myo-inositol) + H2O = 1-hexadecanoyl-sn-glycero-3-phospho-(1D-myo-inositol) + (9Z)-octadecenoate + H(+). The enzyme catalyses 1-heptadecanoyl-2-(5Z,8Z,11Z,14Z-eicosatetraenoyl)-sn-glycero-3-phosphoethanolamine + H2O = 1-heptadecanoyl-sn-glycero-3-phosphoethanolamine + (5Z,8Z,11Z,14Z)-eicosatetraenoate + H(+). It catalyses the reaction 1-hexadecanoyl-2-(9Z-octadecenoyl)-sn-glycero-3-phospho-(1'-sn-glycerol) + H2O = 1-hexadecanoyl-sn-glycero-3-phospho-(1'-sn-glycerol) + (9Z)-octadecenoate + H(+). The catalysed reaction is Hydrolyzes glycerol monoesters of long-chain fatty acids.. It carries out the reaction 1-tetradecanoylglycerol + H2O = tetradecanoate + glycerol + H(+). The enzyme catalyses 2-hexadecanoylglycerol + H2O = glycerol + hexadecanoate + H(+). It catalyses the reaction 1-(9Z-octadecenoyl)-glycerol + H2O = glycerol + (9Z)-octadecenoate + H(+). The catalysed reaction is 2-(9Z-octadecenoyl)-glycerol + H2O = glycerol + (9Z)-octadecenoate + H(+). It carries out the reaction 2-(9Z,12Z-octadecadienoyl)-glycerol + H2O = (9Z,12Z)-octadecadienoate + glycerol + H(+). The enzyme catalyses 1-(5Z,8Z,11Z,14Z-eicosatetraenoyl)-glycerol + H2O = glycerol + (5Z,8Z,11Z,14Z)-eicosatetraenoate + H(+). It catalyses the reaction 2-(5Z,8Z,11Z,14Z-eicosatetraenoyl)-glycerol + H2O = glycerol + (5Z,8Z,11Z,14Z)-eicosatetraenoate + H(+). The catalysed reaction is prostaglandin D2-1-glycerol ester + H2O = prostaglandin D2 + glycerol + H(+). It carries out the reaction 2-glyceryl-15-deoxy-Delta(12,14)-prostaglandin J2 + H2O = 15-deoxy-Delta(12,14)-prostaglandin J2 + glycerol + H(+). The enzyme catalyses 1-(9Z,12Z-octadecadienoyl)-glycerol + H2O = (9Z,12Z)-octadecadienoate + glycerol + H(+). In terms of biological role, phosphatidylserine (PS) lipase that mediates the hydrolysis of phosphatidylserine to generate lysophosphatidylserine (LPS). LPS constitutes a class of signaling lipids that regulates immunological and neurological processes. Has no activity towards diacylglycerol, triacylglycerol or lysophosphatidylserine lipase. Also has monoacylglycerol lipase activity, with preference for 1-(9Z,12Z-octadecadienoyl)-glycerol (1-LG) and 2-glyceryl-15-deoxy-Delta(12,14)-prostaglandin J2 (15d-PGJ(2)-G). The sequence is that of Phosphatidylserine lipase ABHD16A from Macaca fascicularis (Crab-eating macaque).